Consider the following 302-residue polypeptide: Probable alpha-L-glutamate ligase (302 aa).

The ATP-grasp domain occupies 104–287 (MQLLSRKGIG…IAGMVFEFLE (184 aa)). ATP contacts are provided by residues Lys-141, 178–179 (EF), Asp-187, and 211–213 (RSN). Positions 248, 260, and 262 each coordinate Mg(2+). Positions 248, 260, and 262 each coordinate Mn(2+).

Belongs to the RimK family. Requires Mg(2+) as cofactor. The cofactor is Mn(2+).

This is Probable alpha-L-glutamate ligase from Psychromonas ingrahamii (strain DSM 17664 / CCUG 51855 / 37).